The following is a 495-amino-acid chain: Putative FAD-containing monooxygenase MymA (495 aa).

FAD-binding positions include S15, E36, W45, 56–57 (DS), and V104.

The protein belongs to the FAD-binding monooxygenase family. FAD serves as cofactor.

Required for maintaining the appropriate mycolic acid composition and permeability of the envelope on its exposure to acidic pH. The chain is Putative FAD-containing monooxygenase MymA (mymA) from Mycobacterium tuberculosis (strain CDC 1551 / Oshkosh).